Consider the following 623-residue polypeptide: Xaa-Pro aminopeptidase 1 (623 aa).

Arginine 77 provides a ligand contact to a peptide. At lysine 304 the chain carries N6-acetyllysine. Residue histidine 395 coordinates a peptide. Mn(2+) is bound by residues aspartate 415, aspartate 426, and histidine 489. Histidine 489, histidine 498, and glutamate 523 together coordinate a peptide. The Mn(2+) site is built by glutamate 523 and glutamate 537.

The protein belongs to the peptidase M24B family. As to quaternary structure, homodimer. The cofactor is Mn(2+). Expressed in all tissues tested, including liver, adrenal decapsular tissue, adrenal capsular tissue, corpus luteum, testis, submandibular gland, thymus, brain, cerebellum and heart. Highest levels in testis.

Its subcellular location is the cytoplasm. It carries out the reaction Release of any N-terminal amino acid, including proline, that is linked to proline, even from a dipeptide or tripeptide.. With respect to regulation, inhibited by inositol hexakisphosphate. Functionally, metalloaminopeptidase that catalyzes the removal of a penultimate prolyl residue from the N-termini of peptides, such as Arg-Pro-Pro. Contributes to the degradation of bradykinin. This Rattus norvegicus (Rat) protein is Xaa-Pro aminopeptidase 1.